Here is an 840-residue protein sequence, read N- to C-terminus: Microcephalin (840 aa).

Residues 1–93 enclose the BRCT 1 domain; it reads MAAHILKDVV…AHIDESLFPA (93 aa). The segment at 184–206 is disordered; the sequence is KEKRENLSPSSSQMIQQSHDNPS. The span at 190–206 shows a compositional bias: polar residues; it reads LSPSSSQMIQQSHDNPS. A phosphoserine mark is found at serine 279, serine 287, serine 296, and serine 333. Disordered regions lie at residues 313–379 and 418–437; these read PDQK…SIRR and PDNL…QLPS. Position 335 is a phosphothreonine (threonine 335). Residues 355–378 are compositionally biased toward basic residues; sequence KRQRVSHGSHSPSKGKSKRKRSIR. Over residues 427 to 437 the composition is skewed to polar residues; it reads ENLPPTSQLPS. Serine 552 bears the Phosphoserine mark. A disordered region spans residues 562–586; the sequence is LKSTQNKGTTSKISNSSEGEAQSEH. Over residues 563–581 the composition is skewed to polar residues; the sequence is KSTQNKGTTSKISNSSEGE. BRCT domains follow at residues 644 to 734 and 755 to 837; these read SGRG…PFEL and YRGT…NYLL.

As to quaternary structure, interacts with CDC27 and maybe other components of the APC/C complex. Interacts with histone variant H2AX under DNA damage conditions.

It is found in the cytoplasm. The protein localises to the cytoskeleton. Its subcellular location is the microtubule organizing center. It localises to the centrosome. Its function is as follows. Implicated in chromosome condensation and DNA damage induced cellular responses. May play a role in neurogenesis and regulation of the size of the cerebral cortex. The chain is Microcephalin from Hylobates lar (Lar gibbon).